The primary structure comprises 315 residues: Olfactory receptor 4A8 (315 aa).

Over 1 to 24 the chain is Extracellular; sequence MRQNNNITEFVLLGFSQYPDVQNA. The N-linked (GlcNAc...) asparagine glycan is linked to Asn-6. A helical membrane pass occupies residues 25–45; the sequence is LFVMFLLIYIVTMVGNLLIVV. At 46–57 the chain is on the cytoplasmic side; it reads SIIASPFLGSPV. The chain crosses the membrane as a helical span at residues 58-80; sequence YFFLACLSFIDAVYSTTISPVLI. The Extracellular portion of the chain corresponds to 81 to 95; sequence VDLLCDKKTISFPAC. Cys-95 and Cys-177 form a disulfide bridge. Residues 96-116 form a helical membrane-spanning segment; that stretch reads MGQLFIEHLFGDTDVFLLVVM. The Cytoplasmic segment spans residues 117–139; that stretch reads AYDRYVATCKPLRYLTIMNRQVC. Residues 140–160 traverse the membrane as a helical segment; the sequence is ILLLVVAVTGGFLHSVFQILV. At 161–193 the chain is on the extracellular side; it reads VYSLPFCGPNVIYHFFCNIYPLLDLECTDTYFV. A helical membrane pass occupies residues 194–214; sequence GLAVVFNGGAICMVIFTLLLI. Over 215-235 the chain is Cytoplasmic; the sequence is SYGVILNSLKTYSPEGRHKAP. A helical transmembrane segment spans residues 236–256; sequence FICSSHFIMVILFFVPCIFLY. Topologically, residues 257-266 are extracellular; sequence VRPVSNFPID. The helical transmembrane segment at 267–287 threads the bilayer; that stretch reads KFLTVFYSVITPKLNPFIYML. At 288 to 315 the chain is on the cytoplasmic side; that stretch reads RNSEMRNAIENLLGYQSGKTGFRCSKLN.

This sequence belongs to the G-protein coupled receptor 1 family.

It is found in the cell membrane. Odorant receptor. The chain is Olfactory receptor 4A8 (OR4A8) from Homo sapiens (Human).